Here is an 821-residue protein sequence, read N- to C-terminus: Maternal DNA replication licensing factor mcm6 (821 aa).

The C4-type zinc-finger motif lies at 159–186 (CMDCQSVVKDVEQQFRYTQPTICKNPVC). Positions 347 to 554 (LYHNLCTSLF…TDYAIARRIV (208 aa)) constitute an MCM domain. 397–404 (GDPSTSKS) provides a ligand contact to ATP. Residues 529-532 (SRFD) carry the Arginine finger motif.

The protein belongs to the MCM family. Component of the mcm2-7 complex (RLF-M). The complex forms a toroidal hexameric ring with the proposed subunit order mcm2-mcm6-mcm4-mcm7-mcm3-mcm5. The heterodimer of mmcm3/mcm5 interacts with mcm4, mmcm6, mcm7 and weakly with mcm2. Component of the CMG helicase complex, composed of the mcm2-7 complex, the GINS complex and cdc45.

Its subcellular location is the nucleus. The protein localises to the chromosome. The enzyme catalyses ATP + H2O = ADP + phosphate + H(+). In terms of biological role, acts as a component of the mcm2-7 complex (mcm complex) which is the putative replicative helicase essential for 'once per cell cycle' DNA replication initiation and elongation in eukaryotic cells. The active ATPase sites in the mcm2-7 ring are formed through the interaction surfaces of two neighboring subunits such that a critical structure of a conserved arginine finger motif is provided in trans relative to the ATP-binding site of the Walker A box of the adjacent subunit. The six ATPase active sites, however, are likely to contribute differentially to the complex helicase activity. The existence of maternal and zygotic forms of mcm3 and mcm6 suggests that specific forms of mcm2-7 complexes may be used during different stages of development. The sequence is that of Maternal DNA replication licensing factor mcm6 from Xenopus tropicalis (Western clawed frog).